The chain runs to 501 residues: Geissoschizine oxidase (501 aa).

Residues 1-21 (MEFSFSSPALYIVYFLLFFVV) form a helical membrane-spanning segment. An N-linked (GlcNAc...) asparagine glycan is attached at N60. C442 serves as a coordination point for heme.

Belongs to the cytochrome P450 family. Heme serves as cofactor. Expressed in leaf epidermis. Also present in the leaf internal phloem-associated parenchyma (IPAP) inside the mesophyll.

It localises to the membrane. The enzyme catalyses (19E)-geissoschizine + reduced [NADPH--hemoprotein reductase] + O2 = akuammicine + formate + oxidized [NADPH--hemoprotein reductase] + H2O + H(+). The catalysed reaction is (19E)-geissoschizine + reduced [NADPH--hemoprotein reductase] + O2 = 3,17-didehydrostemmadenine + oxidized [NADPH--hemoprotein reductase] + 2 H2O. Its pathway is alkaloid biosynthesis. Functionally, component of the seco-iridoid and derivatives monoterpenoid indole alkaloids (MIAs, e.g. vincristine, quinine, and strychnine) biosynthesis pathway. Catalyzes the oxidation of 19E-geissoschizine to produce a short-lived MIA unstable intermediate which can be spontaneously converted into akuammicine or oxidized by Redox1 and Redox2 to produce stemmadenine and 16S/R-deshydroxymethylstemmadenine (16S/R-DHS). The polypeptide is Geissoschizine oxidase (Catharanthus roseus (Madagascar periwinkle)).